The sequence spans 371 residues: Carbamoyl phosphate synthase small chain (371 aa).

A CPSase region spans residues 1–190 (MRKTAILALE…LYRENEKPLV (190 aa)). The L-glutamine site is built by Ser47, Gly237, and Gly239. A Glutamine amidotransferase type-1 domain is found at 189–371 (LVAVIDFGVK…FKEFVKMAQG (183 aa)). Cys264 (nucleophile) is an active-site residue. Residues Leu265, Gln268, Asn306, and Phe309 each contribute to the L-glutamine site. Residues His348 and Glu350 contribute to the active site.

The protein belongs to the CarA family. Composed of two chains; the small (or glutamine) chain promotes the hydrolysis of glutamine to ammonia, which is used by the large (or ammonia) chain to synthesize carbamoyl phosphate. Tetramer of heterodimers (alpha,beta)4.

The enzyme catalyses hydrogencarbonate + L-glutamine + 2 ATP + H2O = carbamoyl phosphate + L-glutamate + 2 ADP + phosphate + 2 H(+). The catalysed reaction is L-glutamine + H2O = L-glutamate + NH4(+). It participates in amino-acid biosynthesis; L-arginine biosynthesis; carbamoyl phosphate from bicarbonate: step 1/1. It functions in the pathway pyrimidine metabolism; UMP biosynthesis via de novo pathway; (S)-dihydroorotate from bicarbonate: step 1/3. Its function is as follows. Small subunit of the glutamine-dependent carbamoyl phosphate synthetase (CPSase). CPSase catalyzes the formation of carbamoyl phosphate from the ammonia moiety of glutamine, carbonate, and phosphate donated by ATP, constituting the first step of 2 biosynthetic pathways, one leading to arginine and/or urea and the other to pyrimidine nucleotides. The small subunit (glutamine amidotransferase) binds and cleaves glutamine to supply the large subunit with the substrate ammonia. This chain is Carbamoyl phosphate synthase small chain, found in Aquifex aeolicus (strain VF5).